Consider the following 134-residue polypeptide: Neuropeptide-like peptide 11 (134 aa).

Positions 1 to 20 (MMSTLALVSLAIFGIAVVCA) are cleaved as a signal peptide. Positions 21–106 (APKPATVPVA…YNRLIDAGKK (86 aa)) are excised as a propeptide. At Ala131 the chain carries Alanine amide.

The chain is Neuropeptide-like peptide 11 (nlp-11) from Caenorhabditis elegans.